Consider the following 427-residue polypeptide: Enolase 2 (427 aa).

Gln-163 contacts (2R)-2-phosphoglycerate. Residue Glu-205 is the Proton donor of the active site. Mg(2+) is bound by residues Asp-242, Glu-285, and Asp-312. Residues Lys-337, Arg-366, Ser-367, and Lys-388 each coordinate (2R)-2-phosphoglycerate. Lys-337 (proton acceptor) is an active-site residue.

Belongs to the enolase family. In terms of assembly, component of the RNA degradosome, a multiprotein complex involved in RNA processing and mRNA degradation. It depends on Mg(2+) as a cofactor.

It is found in the cytoplasm. It localises to the secreted. Its subcellular location is the cell surface. The catalysed reaction is (2R)-2-phosphoglycerate = phosphoenolpyruvate + H2O. It participates in carbohydrate degradation; glycolysis; pyruvate from D-glyceraldehyde 3-phosphate: step 4/5. Catalyzes the reversible conversion of 2-phosphoglycerate (2-PG) into phosphoenolpyruvate (PEP). It is essential for the degradation of carbohydrates via glycolysis. This is Enolase 2 from Methylococcus capsulatus (strain ATCC 33009 / NCIMB 11132 / Bath).